The sequence spans 382 residues: Protein phosphatase 1A (382 aa).

Residue G2 is the site of N-myristoyl glycine attachment. In terms of domain architecture, PPM-type phosphatase spans 23 to 291 (RYGLSSMQGW…DNMSVILICF (269 aa)). Mn(2+) contacts are provided by D60, G61, D239, and D282. Residues S375 and S377 each carry the phosphoserine modification.

This sequence belongs to the PP2C family. Monomer. Interacts with SMAD2; the interaction dephosphorylates SMAD2 in its C-terminal SXS motif resulting in disruption of the SMAD2/SMAD4 complex, SMAD2 nuclear export and termination of the TGF-beta-mediated signaling. Interacts with SMAD2; the interaction dephosphorylates SMAD2 in its C-terminal SXS motif resulting in disruption of the SMAD2/SMAD4 complex, SMAD2 nuclear export and termination of the TGF-beta-mediated signaling. Interacts with the phosphorylated form of IKBKB/IKKB. The cofactor is Mg(2+). It depends on Mn(2+) as a cofactor. In terms of processing, N-myristoylation is essential for the recognition of its substrates for dephosphorylation.

It localises to the nucleus. Its subcellular location is the cytoplasm. The protein resides in the cytosol. It is found in the membrane. The enzyme catalyses O-phospho-L-seryl-[protein] + H2O = L-seryl-[protein] + phosphate. It catalyses the reaction O-phospho-L-threonyl-[protein] + H2O = L-threonyl-[protein] + phosphate. Its function is as follows. Enzyme with a broad specificity. Negatively regulates TGF-beta signaling through dephosphorylating SMAD2 and SMAD3, resulting in their dissociation from SMAD4, nuclear export of the SMADs and termination of the TGF-beta-mediated signaling. Dephosphorylates PRKAA1 and PRKAA2. Plays an important role in the termination of TNF-alpha-mediated NF-kappa-B activation through dephosphorylating and inactivating IKBKB/IKKB. This is Protein phosphatase 1A (PPM1A) from Bos taurus (Bovine).